The following is a 102-amino-acid chain: Large ribosomal subunit protein bL21 (102 aa).

It belongs to the bacterial ribosomal protein bL21 family. As to quaternary structure, part of the 50S ribosomal subunit. Contacts protein L20.

Functionally, this protein binds to 23S rRNA in the presence of protein L20. The sequence is that of Large ribosomal subunit protein bL21 from Lawsonia intracellularis.